The sequence spans 131 residues: Phosphoribosyl-AMP cyclohydrolase (131 aa).

Residue D90 coordinates Mg(2+). A Zn(2+)-binding site is contributed by C91. Mg(2+) contacts are provided by D92 and D94. Positions 107 and 114 each coordinate Zn(2+).

This sequence belongs to the PRA-CH family. Homodimer. The cofactor is Mg(2+). Requires Zn(2+) as cofactor.

It is found in the cytoplasm. The enzyme catalyses 1-(5-phospho-beta-D-ribosyl)-5'-AMP + H2O = 1-(5-phospho-beta-D-ribosyl)-5-[(5-phospho-beta-D-ribosylamino)methylideneamino]imidazole-4-carboxamide. It participates in amino-acid biosynthesis; L-histidine biosynthesis; L-histidine from 5-phospho-alpha-D-ribose 1-diphosphate: step 3/9. In terms of biological role, catalyzes the hydrolysis of the adenine ring of phosphoribosyl-AMP. The sequence is that of Phosphoribosyl-AMP cyclohydrolase from Hyphomonas neptunium (strain ATCC 15444).